The following is a 291-amino-acid chain: Methionine aminopeptidase (291 aa).

Residue His-118 coordinates substrate. Residues Asp-135, Asp-146, and His-209 each contribute to the a divalent metal cation site. His-216 is a binding site for substrate. Positions 241 and 273 each coordinate a divalent metal cation.

This sequence belongs to the peptidase M24A family. Methionine aminopeptidase type 1 subfamily. As to quaternary structure, monomer. Requires Co(2+) as cofactor. Zn(2+) is required as a cofactor. Mn(2+) serves as cofactor. It depends on Fe(2+) as a cofactor.

It catalyses the reaction Release of N-terminal amino acids, preferentially methionine, from peptides and arylamides.. Functionally, removes the N-terminal methionine from nascent proteins. The N-terminal methionine is often cleaved when the second residue in the primary sequence is small and uncharged (Met-Ala-, Cys, Gly, Pro, Ser, Thr, or Val). Requires deformylation of the N(alpha)-formylated initiator methionine before it can be hydrolyzed. The protein is Methionine aminopeptidase of Chlamydia trachomatis serovar D (strain ATCC VR-885 / DSM 19411 / UW-3/Cx).